A 59-amino-acid chain; its full sequence is Putative potassium channel toxin Ts25 (59 aa).

A signal peptide spans 1–22 (MKAFYGILIIFILISMIHLSQQ). Cystine bridges form between Cys29–Cys50, Cys35–Cys55, and Cys39–Cys57.

This sequence belongs to the short scorpion toxin superfamily. Potassium channel inhibitor family. Alpha-KTx 04 subfamily. Expressed by the venom gland.

The protein resides in the secreted. Potently blocks Kv1.1/KCNA1 (85%), Kv1.2/KCNA2 (91%), Kv1.3/KCNA3 (89%), Kv1.6/KCNA6 (94%), and Shaker (97%). In Tityus serrulatus (Brazilian scorpion), this protein is Putative potassium channel toxin Ts25.